The chain runs to 280 residues: 4-diphosphocytidyl-2-C-methyl-D-erythritol kinase (280 aa).

Residue Lys-8 is part of the active site. 91 to 101 (PVSAGLAGGST) serves as a coordination point for ATP. Residue Asp-133 is part of the active site.

This sequence belongs to the GHMP kinase family. IspE subfamily.

The catalysed reaction is 4-CDP-2-C-methyl-D-erythritol + ATP = 4-CDP-2-C-methyl-D-erythritol 2-phosphate + ADP + H(+). The protein operates within isoprenoid biosynthesis; isopentenyl diphosphate biosynthesis via DXP pathway; isopentenyl diphosphate from 1-deoxy-D-xylulose 5-phosphate: step 3/6. Its function is as follows. Catalyzes the phosphorylation of the position 2 hydroxy group of 4-diphosphocytidyl-2C-methyl-D-erythritol. The protein is 4-diphosphocytidyl-2-C-methyl-D-erythritol kinase of Clostridium botulinum (strain Eklund 17B / Type B).